Reading from the N-terminus, the 238-residue chain is 4-hydroxy-tetrahydrodipicolinate reductase (238 aa).

An NAD(+)-binding site is contributed by 12–17; sequence GASGRM. Position 40 (Arg40) interacts with NADP(+). Residues 93–95 and 117–120 each bind NAD(+); these read GTT and ASNF. The Proton donor/acceptor role is filled by His149. His150 lines the (S)-2,3,4,5-tetrahydrodipicolinate pocket. Lys153 serves as the catalytic Proton donor. 159–160 lines the (S)-2,3,4,5-tetrahydrodipicolinate pocket; the sequence is GT.

The protein belongs to the DapB family.

The protein localises to the cytoplasm. The catalysed reaction is (S)-2,3,4,5-tetrahydrodipicolinate + NAD(+) + H2O = (2S,4S)-4-hydroxy-2,3,4,5-tetrahydrodipicolinate + NADH + H(+). The enzyme catalyses (S)-2,3,4,5-tetrahydrodipicolinate + NADP(+) + H2O = (2S,4S)-4-hydroxy-2,3,4,5-tetrahydrodipicolinate + NADPH + H(+). The protein operates within amino-acid biosynthesis; L-lysine biosynthesis via DAP pathway; (S)-tetrahydrodipicolinate from L-aspartate: step 4/4. In terms of biological role, catalyzes the conversion of 4-hydroxy-tetrahydrodipicolinate (HTPA) to tetrahydrodipicolinate. The sequence is that of 4-hydroxy-tetrahydrodipicolinate reductase from Xanthomonas euvesicatoria pv. vesicatoria (strain 85-10) (Xanthomonas campestris pv. vesicatoria).